The chain runs to 199 residues: FMN-dependent NADH:quinone oxidoreductase (199 aa).

Residues Ser-10, 16–18 (SVS), and 96–99 (MYNF) each bind FMN.

This sequence belongs to the azoreductase type 1 family. As to quaternary structure, homodimer. It depends on FMN as a cofactor.

It catalyses the reaction 2 a quinone + NADH + H(+) = 2 a 1,4-benzosemiquinone + NAD(+). The enzyme catalyses N,N-dimethyl-1,4-phenylenediamine + anthranilate + 2 NAD(+) = 2-(4-dimethylaminophenyl)diazenylbenzoate + 2 NADH + 2 H(+). In terms of biological role, quinone reductase that provides resistance to thiol-specific stress caused by electrophilic quinones. Functionally, also exhibits azoreductase activity. Catalyzes the reductive cleavage of the azo bond in aromatic azo compounds to the corresponding amines. The protein is FMN-dependent NADH:quinone oxidoreductase of Azotobacter vinelandii (strain DJ / ATCC BAA-1303).